The primary structure comprises 262 residues: Nitrate transport protein NasD (262 aa).

Residues 5 to 239 form the ABC transporter domain; sequence IQVQGVSQRF…RPRNRVQLAD (235 aa). 41–48 provides a ligand contact to ATP; that stretch reads GHSGCGKS.

It belongs to the ABC transporter superfamily.

The protein resides in the cell membrane. Functionally, probably part of a high-affinity binding-protein-dependent transport system for nitrate. Probably responsible for energy coupling to the transport system. This Klebsiella oxytoca protein is Nitrate transport protein NasD (nasD).